The primary structure comprises 298 residues: Diphthine methyl ester synthase (298 aa).

S-adenosyl-L-methionine-binding positions include Leu9, Asp85, Gly88, 113 to 114 (SV), Leu164, Leu222, and His247.

It belongs to the diphthine synthase family.

It is found in the cytoplasm. The catalysed reaction is 2-[(3S)-amino-3-carboxypropyl]-L-histidyl-[translation elongation factor 2] + 4 S-adenosyl-L-methionine = diphthine methyl ester-[translation elongation factor 2] + 4 S-adenosyl-L-homocysteine + 3 H(+). It participates in protein modification; peptidyl-diphthamide biosynthesis. In terms of biological role, S-adenosyl-L-methionine-dependent methyltransferase that catalyzes four methylations of the modified target histidine residue in translation elongation factor 2 (EF-2), to form an intermediate called diphthine methyl ester. The four successive methylation reactions represent the second step of diphthamide biosynthesis. This is Diphthine methyl ester synthase (DPH5) from Eremothecium gossypii (strain ATCC 10895 / CBS 109.51 / FGSC 9923 / NRRL Y-1056) (Yeast).